Reading from the N-terminus, the 267-residue chain is Matrilysin (267 aa).

Positions 1–20 (MAAMRLTLFRIVCLLPGCLA) are cleaved as a signal peptide. A propeptide spans 21-97 (LPLSQEAGEV…PRCGVPDVAE (77 aa)) (activation peptide). A Cysteine switch motif is present at residues 88–95 (PRCGVPDV). Cys90 contributes to the Zn(2+) binding site. Residue Asp156 participates in Ca(2+) binding. Zn(2+)-binding residues include His166 and Asp168. Positions 173, 174, 176, and 178 each coordinate Ca(2+). Zn(2+) is bound at residue His181. The Ca(2+) site is built by Gly188, Gly190, and Asp192. Position 194 (His194) interacts with Zn(2+). Ca(2+)-binding residues include Asp196 and Glu199. Residue His217 coordinates Zn(2+). Residue Glu218 is part of the active site. Zn(2+) is bound by residues His221 and His227.

Belongs to the peptidase M10A family. Requires Ca(2+) as cofactor. The cofactor is Zn(2+).

It is found in the secreted. It localises to the extracellular space. The protein resides in the extracellular matrix. The enzyme catalyses Cleavage of 14-Ala-|-Leu-15 and 16-Tyr-|-Leu-17 in B chain of insulin. No action on collagen types I, II, IV, V. Cleaves gelatin chain alpha2(I) &gt; alpha1(I).. Functionally, degrades casein, gelatins of types I, III, IV, and V, and fibronectin. Activates procollagenase. The chain is Matrilysin (Mmp7) from Rattus norvegicus (Rat).